The sequence spans 1277 residues: Protein FAM83H (1277 aa).

Residues 1 to 12 (MARRSQSSSQGE) are compositionally biased toward polar residues. 8 disordered regions span residues 1 to 20 (MARR…PNYL), 67 to 98 (SLQR…SGTY), 717 to 756 (FGST…TNPL), 772 to 805 (SKLE…TGRT), 971 to 1018 (EQTS…NSAF), 1070 to 1130 (KAEE…SRLS), 1158 to 1225 (QKNR…RDIL), and 1247 to 1266 (KKDE…AGKI). Residues 724–750 (SVEKAKENPPAEKEKEEGLLSRHDSFR) show a composition bias toward basic and acidic residues. 4 stretches are compositionally biased toward polar residues: residues 777–805 (HTST…TGRT), 971–982 (EQTSSTIQTIGN), 993–1015 (SGPT…TRPN), and 1112–1130 (KSLS…SRLS). Residues 1204–1215 (SFLSRSRFSRPS) are compositionally biased toward low complexity. A compositionally biased stretch (basic and acidic residues) spans 1247 to 1263 (KKDEQPSHADDNDDKKA).

Belongs to the FAM83 family.

The protein localises to the cytoplasm. It localises to the cytoskeleton. May play a role in keratin cytoskeleton disassembly. This Xenopus tropicalis (Western clawed frog) protein is Protein FAM83H.